Here is a 267-residue protein sequence, read N- to C-terminus: Dihydropteroate synthase (267 aa).

Residues 1 to 251 (MTKTKIMGIL…NVELNAKLAK (251 aa)) form the Pterin-binding domain. Asn-11 contacts Mg(2+). (7,8-dihydropterin-6-yl)methyl diphosphate contacts are provided by residues Thr-51, Asp-84, Asn-103, Asp-167, Lys-203, and 239 to 241 (RVH).

This sequence belongs to the DHPS family. In terms of assembly, homodimer. It depends on Mg(2+) as a cofactor.

It carries out the reaction (7,8-dihydropterin-6-yl)methyl diphosphate + 4-aminobenzoate = 7,8-dihydropteroate + diphosphate. It participates in cofactor biosynthesis; tetrahydrofolate biosynthesis; 7,8-dihydrofolate from 2-amino-4-hydroxy-6-hydroxymethyl-7,8-dihydropteridine diphosphate and 4-aminobenzoate: step 1/2. In terms of biological role, catalyzes the condensation of para-aminobenzoate (pABA) with 6-hydroxymethyl-7,8-dihydropterin diphosphate (DHPt-PP) to form 7,8-dihydropteroate (H2Pte), the immediate precursor of folate derivatives. The polypeptide is Dihydropteroate synthase (folP) (Staphylococcus aureus (strain Mu50 / ATCC 700699)).